A 321-amino-acid polypeptide reads, in one-letter code: NADH-ubiquinone oxidoreductase chain 1 (321 aa).

8 helical membrane-spanning segments follow: residues 6–26, 67–87, 103–123, 143–163, 174–194, 220–240, 256–276, and 296–316; these read IVPPALLIISILMAVAFLTAL, LLATPTLFILAPTAALMLALA, LGLLLLLAMSSLMVYSFLWSG, ISYEVTLAIIVLSIVLLSGGF, PLYLALATWPSMMMWYTSTLA, ASPFALFFLAEYANIMLMNTL, ALFTIALMSKALLLTMSFLWV, and FLPMTLTLCLWHSSVPMSMFG.

It belongs to the complex I subunit 1 family.

The protein resides in the mitochondrion inner membrane. The enzyme catalyses a ubiquinone + NADH + 5 H(+)(in) = a ubiquinol + NAD(+) + 4 H(+)(out). Core subunit of the mitochondrial membrane respiratory chain NADH dehydrogenase (Complex I) that is believed to belong to the minimal assembly required for catalysis. Complex I functions in the transfer of electrons from NADH to the respiratory chain. The immediate electron acceptor for the enzyme is believed to be ubiquinone. The polypeptide is NADH-ubiquinone oxidoreductase chain 1 (MT-ND1) (Alligator mississippiensis (American alligator)).